We begin with the raw amino-acid sequence, 248 residues long: Probable succinyl-CoA:3-ketoacid coenzyme A transferase subunit A (248 aa).

CoA is bound at residue 24–30; the sequence is GGFGLCG.

Belongs to the 3-oxoacid CoA-transferase subunit A family. As to quaternary structure, heterodimer of a subunit A and a subunit B.

It catalyses the reaction a 3-oxo acid + succinyl-CoA = a 3-oxoacyl-CoA + succinate. The sequence is that of Probable succinyl-CoA:3-ketoacid coenzyme A transferase subunit A (scoA) from Mycobacterium bovis (strain ATCC BAA-935 / AF2122/97).